A 170-amino-acid polypeptide reads, in one-letter code: Macro domain-containing protein VPA0103 (170 aa).

The region spanning 1 to 170 (MNAISLVQGD…SIWQHALTQH (170 aa)) is the Macro domain.

This sequence belongs to the MacroD-type family.

In Vibrio parahaemolyticus serotype O3:K6 (strain RIMD 2210633), this protein is Macro domain-containing protein VPA0103.